Consider the following 156-residue polypeptide: Ribosome maturation factor RimP (156 aa).

The protein belongs to the RimP family.

The protein localises to the cytoplasm. Its function is as follows. Required for maturation of 30S ribosomal subunits. This chain is Ribosome maturation factor RimP, found in Bacillus cytotoxicus (strain DSM 22905 / CIP 110041 / 391-98 / NVH 391-98).